The sequence spans 248 residues: MPRFLNGWLTDVVQASLSRPKIEKVRDRPIFSLKKSIISAKNSGLNPIIAEYKRRSPSGINVDINIIEYVKFMENNGATGISVLTEEKFFNGSYNDLELVAKNVKLPILMKDFVVSEKQIDSAYNIGADVILLIAKILTERELVSLYKYAKSYGLEAIVEISDEEDLDVALRGNYDFIGVNARNLESLEVSLDRTKKLLQMIPKDRLKIAESGISTRQDIEELRASGADAFLIGTSLLKDQNKIKELI.

The protein belongs to the TrpC family.

It carries out the reaction 1-(2-carboxyphenylamino)-1-deoxy-D-ribulose 5-phosphate + H(+) = (1S,2R)-1-C-(indol-3-yl)glycerol 3-phosphate + CO2 + H2O. Its pathway is amino-acid biosynthesis; L-tryptophan biosynthesis; L-tryptophan from chorismate: step 4/5. In Sulfolobus acidocaldarius (strain ATCC 33909 / DSM 639 / JCM 8929 / NBRC 15157 / NCIMB 11770), this protein is Indole-3-glycerol phosphate synthase.